The primary structure comprises 424 residues: Histidine--tRNA ligase (424 aa).

The protein belongs to the class-II aminoacyl-tRNA synthetase family. In terms of assembly, homodimer.

The protein resides in the cytoplasm. It catalyses the reaction tRNA(His) + L-histidine + ATP = L-histidyl-tRNA(His) + AMP + diphosphate + H(+). This Shewanella amazonensis (strain ATCC BAA-1098 / SB2B) protein is Histidine--tRNA ligase.